The following is a 286-amino-acid chain: Master replication protein (286 aa).

The CRESS-DNA virus Rep endonuclease domain occupies 2 to 96 (ARQVICWCFT…VEGPWEFGEF (95 aa)). The RCR-1 motif lies at 9-12 (CFTL). 2 residues coordinate a divalent metal cation: Glu33 and His41. Positions 41 to 43 (HYQ) match the RCR-2 motif. The Nuclear localization signal signature appears at 50–70 (KRTSLVQMKKLLPGAHLEKRR). The active-site For DNA cleavage activity is Tyr79. The RCR-3 signature appears at 79-82 (YAMK). Asp84 serves as a coordination point for a divalent metal cation. The Nuclear localization signal signature appears at 96–102 (FKEVLED). Position 180–188 (180–188 (GPQGGEGKT)) interacts with ATP.

This sequence belongs to the nanoviridea/circoviridae replication-associated protein family. In terms of assembly, homooligomer (Potential). Rep binds to repeated DNA motifs (iterons). It depends on Mg(2+) as a cofactor. Mn(2+) serves as cofactor.

It localises to the host nucleus. The enzyme catalyses ATP + H2O = ADP + phosphate + H(+). Functionally, essential for the replication of all genomic viral ssDNA (trans-replication). The closed circular ssDNA genome is first converted to a superhelical dsDNA. Rep binds a specific hairpin at the genome origin of replication. Introduces an endonucleolytic nick within the conserved sequence 5'-A[GT]TATTAC-3' in the intergenic region of the genome, thereby initiating the rolling circle replication (RCR). Following cleavage, binds covalently to the 5'-phosphate of DNA as a tyrosyl ester. The cleavage gives rise to a free 3'-OH that serves as a primer for the cellular DNA polymerase. The polymerase synthesizes the (+) strand DNA by rolling circle mechanism. After one round of replication, a Rep-catalyzed nucleotidyl transfer reaction releases a circular single-stranded virus genome, thereby terminating the replication. Displays origin-specific DNA cleavage, nucleotidyl transferase, ATPase and helicase activities. This is Master replication protein (DNA-R) from Subterranean clover stunt virus (strain F) (SCSV).